Consider the following 599-residue polypeptide: Adenine deaminase (599 aa).

This sequence belongs to the metallo-dependent hydrolases superfamily. Adenine deaminase family. Mn(2+) is required as a cofactor.

The enzyme catalyses adenine + H2O + H(+) = hypoxanthine + NH4(+). The protein is Adenine deaminase of Clostridium botulinum (strain ATCC 19397 / Type A).